A 133-amino-acid chain; its full sequence is Large ribosomal subunit protein bL20 (133 aa).

It belongs to the bacterial ribosomal protein bL20 family.

Binds directly to 23S ribosomal RNA and is necessary for the in vitro assembly process of the 50S ribosomal subunit. It is not involved in the protein synthesizing functions of that subunit. This chain is Large ribosomal subunit protein bL20, found in Bartonella bacilliformis (strain ATCC 35685 / KC583 / Herrer 020/F12,63).